The chain runs to 89 residues: MAKKSKIAKAKKQQAMIAKYAPIRQALKEAGDYEGLSKLPKDAHPSRLKLRDQTDGRPRGYMRKFGMSRIRFRELAHQGLIPGVKKASW.

Positions 38–61 (KLPKDAHPSRLKLRDQTDGRPRGY) are disordered. The span at 39-58 (LPKDAHPSRLKLRDQTDGRP) shows a compositional bias: basic and acidic residues.

It belongs to the universal ribosomal protein uS14 family. As to quaternary structure, part of the 30S ribosomal subunit. Contacts proteins S3 and S10.

Functionally, binds 16S rRNA, required for the assembly of 30S particles and may also be responsible for determining the conformation of the 16S rRNA at the A site. The sequence is that of Small ribosomal subunit protein uS14B from Enterococcus faecalis (strain ATCC 700802 / V583).